A 256-amino-acid chain; its full sequence is Leucyl/phenylalanyl-tRNA--protein transferase (256 aa).

The tract at residues 232–256 (DGCTGASRHGPGADMRRGDMSREST) is disordered. The segment covering 245-256 (DMRRGDMSREST) has biased composition (basic and acidic residues).

This sequence belongs to the L/F-transferase family.

The protein resides in the cytoplasm. The catalysed reaction is N-terminal L-lysyl-[protein] + L-leucyl-tRNA(Leu) = N-terminal L-leucyl-L-lysyl-[protein] + tRNA(Leu) + H(+). It catalyses the reaction N-terminal L-arginyl-[protein] + L-leucyl-tRNA(Leu) = N-terminal L-leucyl-L-arginyl-[protein] + tRNA(Leu) + H(+). The enzyme catalyses L-phenylalanyl-tRNA(Phe) + an N-terminal L-alpha-aminoacyl-[protein] = an N-terminal L-phenylalanyl-L-alpha-aminoacyl-[protein] + tRNA(Phe). In terms of biological role, functions in the N-end rule pathway of protein degradation where it conjugates Leu, Phe and, less efficiently, Met from aminoacyl-tRNAs to the N-termini of proteins containing an N-terminal arginine or lysine. The chain is Leucyl/phenylalanyl-tRNA--protein transferase from Chromohalobacter salexigens (strain ATCC BAA-138 / DSM 3043 / CIP 106854 / NCIMB 13768 / 1H11).